An 849-amino-acid polypeptide reads, in one-letter code: Membrane protein-large ribosomal subunit bL9 fusion protein (849 aa).

Residues methionine 1–threonine 680 form a unknown region. The next 2 helical transmembrane spans lie at phenylalanine 11–glutamine 31 and isoleucine 64–phenylalanine 84. Residues lysine 214 to glutamate 342 enclose the GGDEF domain. Residues valine 681–lysine 849 form a large ribosomal subunit protein bL9 region.

Belongs to the bacterial ribosomal protein bL9 family.

The protein resides in the cell membrane. In terms of biological role, binds to the 23S rRNA. The sequence is that of Membrane protein-large ribosomal subunit bL9 fusion protein from Onion yellows phytoplasma (strain OY-M).